Reading from the N-terminus, the 347-residue chain is Dihydroorotase (347 aa).

Zn(2+)-binding residues include H14 and H16. Substrate contacts are provided by residues 16 to 18 (HLR) and N42. Zn(2+) is bound by residues K100, H137, and H175. At K100 the chain carries N6-carboxylysine. A substrate-binding site is contributed by H137. L220 is a binding site for substrate. Position 248 (D248) interacts with Zn(2+). The active site involves D248. 2 residues coordinate substrate: H252 and A264.

The protein belongs to the metallo-dependent hydrolases superfamily. DHOase family. Class II DHOase subfamily. In terms of assembly, homodimer. Zn(2+) is required as a cofactor.

It catalyses the reaction (S)-dihydroorotate + H2O = N-carbamoyl-L-aspartate + H(+). It participates in pyrimidine metabolism; UMP biosynthesis via de novo pathway; (S)-dihydroorotate from bicarbonate: step 3/3. Functionally, catalyzes the reversible cyclization of carbamoyl aspartate to dihydroorotate. The chain is Dihydroorotase from Stutzerimonas stutzeri (strain A1501) (Pseudomonas stutzeri).